We begin with the raw amino-acid sequence, 279 residues long: Protease HtpX homolog (279 aa).

2 helical membrane passes run 6–26 and 29–49; these read VFVL…ALGG and GAIL…WGSS. Residue H130 coordinates Zn(2+). The active site involves E131. H134 is a binding site for Zn(2+). 2 consecutive transmembrane segments (helical) span residues 145–165 and 176–196; these read IAAT…FFGG and VAGI…QFAI. A Zn(2+)-binding site is contributed by E201.

Belongs to the peptidase M48B family. Zn(2+) serves as cofactor.

The protein resides in the cell inner membrane. The chain is Protease HtpX homolog from Gemmatimonas aurantiaca (strain DSM 14586 / JCM 11422 / NBRC 100505 / T-27).